A 357-amino-acid chain; its full sequence is Peptide chain release factor 1 (357 aa).

N5-methylglutamine is present on Q234. A disordered region spans residues 249 to 308 (PSGVEVSCQDEKSQHKNRSKAMRVLRSRVYEKKREEQQAEREEARRSMVGSGDRSAKIRT). The span at 263–274 (HKNRSKAMRVLR) shows a compositional bias: basic residues. Over residues 276 to 294 (RVYEKKREEQQAEREEARR) the composition is skewed to basic and acidic residues.

The protein belongs to the prokaryotic/mitochondrial release factor family. In terms of processing, methylated by PrmC. Methylation increases the termination efficiency of RF1.

The protein resides in the cytoplasm. Functionally, peptide chain release factor 1 directs the termination of translation in response to the peptide chain termination codons UAG and UAA. This is Peptide chain release factor 1 from Salinibacter ruber (strain DSM 13855 / M31).